The chain runs to 301 residues: Acetyl-coenzyme A carboxylase carboxyl transferase subunit beta (301 aa).

Residues 29 to 298 (LWVKCPETGQ…AEPAEEEAEP (270 aa)) form the CoA carboxyltransferase N-terminal domain.

Belongs to the AccD/PCCB family. As to quaternary structure, acetyl-CoA carboxylase is a heterohexamer composed of biotin carboxyl carrier protein (AccB), biotin carboxylase (AccC) and two subunits each of ACCase subunit alpha (AccA) and ACCase subunit beta (AccD).

Its subcellular location is the cytoplasm. It catalyses the reaction N(6)-carboxybiotinyl-L-lysyl-[protein] + acetyl-CoA = N(6)-biotinyl-L-lysyl-[protein] + malonyl-CoA. It functions in the pathway lipid metabolism; malonyl-CoA biosynthesis; malonyl-CoA from acetyl-CoA: step 1/1. In terms of biological role, component of the acetyl coenzyme A carboxylase (ACC) complex. Biotin carboxylase (BC) catalyzes the carboxylation of biotin on its carrier protein (BCCP) and then the CO(2) group is transferred by the transcarboxylase to acetyl-CoA to form malonyl-CoA. This is Acetyl-coenzyme A carboxylase carboxyl transferase subunit beta from Methylobacterium nodulans (strain LMG 21967 / CNCM I-2342 / ORS 2060).